We begin with the raw amino-acid sequence, 467 residues long: Light-independent protochlorophyllide reductase subunit N (467 aa).

Cys-22, Cys-47, and Cys-107 together coordinate [4Fe-4S] cluster.

Belongs to the BchN/ChlN family. Protochlorophyllide reductase is composed of three subunits; ChlL, ChlN and ChlB. Forms a heterotetramer of two ChlB and two ChlN subunits. [4Fe-4S] cluster serves as cofactor.

The protein localises to the plastid. It localises to the chloroplast. It catalyses the reaction chlorophyllide a + oxidized 2[4Fe-4S]-[ferredoxin] + 2 ADP + 2 phosphate = protochlorophyllide a + reduced 2[4Fe-4S]-[ferredoxin] + 2 ATP + 2 H2O. The protein operates within porphyrin-containing compound metabolism; chlorophyll biosynthesis (light-independent). In terms of biological role, component of the dark-operative protochlorophyllide reductase (DPOR) that uses Mg-ATP and reduced ferredoxin to reduce ring D of protochlorophyllide (Pchlide) to form chlorophyllide a (Chlide). This reaction is light-independent. The NB-protein (ChlN-ChlB) is the catalytic component of the complex. The sequence is that of Light-independent protochlorophyllide reductase subunit N from Chara vulgaris (Common stonewort).